We begin with the raw amino-acid sequence, 585 residues long: A-type ATP synthase subunit A (585 aa).

231–238 (GPFGSGKT) serves as a coordination point for ATP.

The protein belongs to the ATPase alpha/beta chains family. In terms of assembly, has multiple subunits with at least A(3), B(3), C, D, E, F, H, I and proteolipid K(x).

The protein localises to the cell membrane. The catalysed reaction is ATP + H2O + 4 H(+)(in) = ADP + phosphate + 5 H(+)(out). Functionally, component of the A-type ATP synthase that produces ATP from ADP in the presence of a proton gradient across the membrane. The A chain is the catalytic subunit. This chain is A-type ATP synthase subunit A, found in Thermococcus sibiricus (strain DSM 12597 / MM 739).